We begin with the raw amino-acid sequence, 289 residues long: Rhodopsin (289 aa).

Over 1-7 (YLVNPAA) the chain is Extracellular. Residues 8 to 32 (YAALGAYMFLLILIGFPVNFLTLYV) traverse the membrane as a helical segment. Residues 33-44 (TIEHKKLRTPLN) lie on the Cytoplasmic side of the membrane. A helical transmembrane segment spans residues 45-67 (YILLNLAVANLFMVLGGFTTTMY). Residues 68-81 (TSMHGYFVLGRLGC) are Extracellular-facing. Cys-81 and Cys-158 form a disulfide bridge. Residues 82 to 104 (NLEGFFATMGGEIALWSLVVLAI) form a helical membrane-spanning segment. The 'Ionic lock' involved in activated form stabilization motif lies at 105–107 (ERW). The Cytoplasmic segment spans residues 105-123 (ERWIVVCKPISNFRFTEDH). A helical membrane pass occupies residues 124-144 (AIMGLAFTWVMALSCAVPPLV). Residues 145–173 (GWSRYIPEGMQCSCGVDYYTRAEGFNNES) lie on the Extracellular side of the membrane. Asn-171 carries N-linked (GlcNAc...) asparagine glycosylation. Residues 174 to 195 (FVIYMFIVHFLTPLIIISFCYG) traverse the membrane as a helical segment. Topologically, residues 196-223 (RLLCAVKEAAAAQQESETTQRAEREVSR) are cytoplasmic. The chain crosses the membrane as a helical span at residues 224–245 (MVVMMVISFLMCWLPYASVAWY). The Extracellular segment spans residues 246–257 (IFCNQGSEFGPI). The chain crosses the membrane as a helical span at residues 258 to 279 (FMTLPAFFAKSSAIYNPLIYIC). Lys-267 bears the N6-(retinylidene)lysine mark. The Cytoplasmic portion of the chain corresponds to 280 to 289 (MNKQFRHCMI).

It belongs to the G-protein coupled receptor 1 family. Opsin subfamily. Phosphorylated on some or all of the serine and threonine residues present in the C-terminal region. In terms of processing, contains one covalently linked retinal chromophore.

It is found in the membrane. It localises to the cell projection. Its subcellular location is the cilium. The protein localises to the photoreceptor outer segment. Functionally, photoreceptor required for image-forming vision at low light intensity. While most salt water fish species use retinal as chromophore, most freshwater fish use 3-dehydroretinal, or a mixture of retinal and 3-dehydroretinal. Light-induced isomerization of 11-cis to all-trans retinal triggers a conformational change that activates signaling via G-proteins. Subsequent receptor phosphorylation mediates displacement of the bound G-protein alpha subunit by arrestin and terminates signaling. This is Rhodopsin (rho) from Cottocomephorus inermis (Longfin Baikal sculpin).